A 59-amino-acid chain; its full sequence is Potassium channel toxin alpha-KTx 1.12 (59 aa).

Residues 1–22 (MKILSVLLLALIICSIVGWSEA) form the signal peptide. Gln23 carries the pyrrolidone carboxylic acid modification. 3 disulfides stabilise this stretch: Cys29-Cys50, Cys35-Cys55, and Cys39-Cys57. Residues 48 to 55 (GKCMNKKC) are interaction with Ca(2+)-activated K(+) channels.

Belongs to the short scorpion toxin superfamily. Potassium channel inhibitor family. Alpha-KTx 01 subfamily. As to expression, expressed by the venom gland.

It localises to the secreted. In terms of biological role, potent selective inhibitor of high conductance (maxi-K), different medium and small conductance calcium-activated potassium channels (KCa1.1/KCNMA1 and others), as well as a voltage-dependent potassium channel (Kv1.3/KCNA3&gt;Kv1.2/KCNA2&gt;Kv1.6/KCNA3&gt;&gt;Shaker/Sh). It blocks channel activity by a simple bimolecular inhibition process. Its function is as follows. Has a pH-specific antimicrobial activity against bacteria (B.subtilis, E.coli and S.aureus) and the fungus C.albicans. The sequence is that of Potassium channel toxin alpha-KTx 1.12 from Leiurus hebraeus (Hebrew deathstalker scorpion).